A 209-amino-acid polypeptide reads, in one-letter code: Protein Bel-1 (209 aa).

3 disordered regions span residues 1-30 (MASKYPEEGPITEGVEEDFNSHSTSGLDLT), 123-143 (FLNSRKESGTPKTDPTRPATS), and 156-185 (CSRPTPSNSESVCNGLGQPSERGHTSGESG). 2 stretches are compositionally biased toward polar residues: residues 21–30 (SHSTSGLDLT) and 132–143 (TPKTDPTRPATS).

Transcriptional transactivator that activates the viral internal promoter (IP), thereby enhancing its own expression. This transactivation is repressed by nuclear factor I. Also transactivates the long terminal repeat (LTR) promoter, thereby inducing structural gene expression, initiating the late phase of infection. It is therefore a key regulator of viral gene expression. It directly binds to and activates DNA target sites of viral promoters and those of distinct cellular genes. Required for viral replication. The chain is Protein Bel-1 (bel1) from Felis catus (Cat).